The sequence spans 211 residues: Large ribosomal subunit protein uL3 (211 aa).

Residues 130 to 154 (RGPMAHGSKFHRHQGSNGSATTPGR) are disordered.

This sequence belongs to the universal ribosomal protein uL3 family. Part of the 50S ribosomal subunit. Forms a cluster with proteins L14 and L19.

One of the primary rRNA binding proteins, it binds directly near the 3'-end of the 23S rRNA, where it nucleates assembly of the 50S subunit. This Lachnospira eligens (strain ATCC 27750 / DSM 3376 / VPI C15-48 / C15-B4) (Eubacterium eligens) protein is Large ribosomal subunit protein uL3.